A 341-amino-acid chain; its full sequence is S-adenosylmethionine:tRNA ribosyltransferase-isomerase (341 aa).

Belongs to the QueA family. Monomer.

It is found in the cytoplasm. It catalyses the reaction 7-aminomethyl-7-carbaguanosine(34) in tRNA + S-adenosyl-L-methionine = epoxyqueuosine(34) in tRNA + adenine + L-methionine + 2 H(+). The protein operates within tRNA modification; tRNA-queuosine biosynthesis. Functionally, transfers and isomerizes the ribose moiety from AdoMet to the 7-aminomethyl group of 7-deazaguanine (preQ1-tRNA) to give epoxyqueuosine (oQ-tRNA). The protein is S-adenosylmethionine:tRNA ribosyltransferase-isomerase of Clostridium botulinum (strain Okra / Type B1).